Reading from the N-terminus, the 308-residue chain is Aspartate carbamoyltransferase catalytic subunit (308 aa).

Positions 51 and 52 each coordinate carbamoyl phosphate. Lysine 80 lines the L-aspartate pocket. The carbamoyl phosphate site is built by arginine 101, histidine 129, and glutamine 132. Positions 162 and 224 each coordinate L-aspartate. Residues leucine 263 and proline 264 each contribute to the carbamoyl phosphate site.

Belongs to the aspartate/ornithine carbamoyltransferase superfamily. ATCase family. As to quaternary structure, heterododecamer (2C3:3R2) of six catalytic PyrB chains organized as two trimers (C3), and six regulatory PyrI chains organized as three dimers (R2).

It catalyses the reaction carbamoyl phosphate + L-aspartate = N-carbamoyl-L-aspartate + phosphate + H(+). The protein operates within pyrimidine metabolism; UMP biosynthesis via de novo pathway; (S)-dihydroorotate from bicarbonate: step 2/3. In terms of biological role, catalyzes the condensation of carbamoyl phosphate and aspartate to form carbamoyl aspartate and inorganic phosphate, the committed step in the de novo pyrimidine nucleotide biosynthesis pathway. This chain is Aspartate carbamoyltransferase catalytic subunit, found in Bacteroides fragilis (strain ATCC 25285 / DSM 2151 / CCUG 4856 / JCM 11019 / LMG 10263 / NCTC 9343 / Onslow / VPI 2553 / EN-2).